Reading from the N-terminus, the 159-residue chain is Protein-export protein SecB (159 aa).

Belongs to the SecB family. In terms of assembly, homotetramer, a dimer of dimers. One homotetramer interacts with 1 SecA dimer.

Its subcellular location is the cytoplasm. One of the proteins required for the normal export of preproteins out of the cell cytoplasm. It is a molecular chaperone that binds to a subset of precursor proteins, maintaining them in a translocation-competent state. It also specifically binds to its receptor SecA. The polypeptide is Protein-export protein SecB (Rhizobium etli (strain CIAT 652)).